The primary structure comprises 432 residues: UDP-N-acetylglucosamine 1-carboxyvinyltransferase (432 aa).

Phosphoenolpyruvate is bound at residue 22-23; sequence KN. Arg101 is a binding site for UDP-N-acetyl-alpha-D-glucosamine. The active-site Proton donor is the Cys125. Position 125 is a 2-(S-cysteinyl)pyruvic acid O-phosphothioketal (Cys125). UDP-N-acetyl-alpha-D-glucosamine-binding positions include 130 to 134, Asp315, and Ile337; that span reads RPVDL.

The protein belongs to the EPSP synthase family. MurA subfamily.

The protein resides in the cytoplasm. The catalysed reaction is phosphoenolpyruvate + UDP-N-acetyl-alpha-D-glucosamine = UDP-N-acetyl-3-O-(1-carboxyvinyl)-alpha-D-glucosamine + phosphate. It participates in cell wall biogenesis; peptidoglycan biosynthesis. In terms of biological role, cell wall formation. Adds enolpyruvyl to UDP-N-acetylglucosamine. The protein is UDP-N-acetylglucosamine 1-carboxyvinyltransferase of Paramagnetospirillum magneticum (strain ATCC 700264 / AMB-1) (Magnetospirillum magneticum).